A 312-amino-acid polypeptide reads, in one-letter code: Ribosomal RNA small subunit methyltransferase H (312 aa).

S-adenosyl-L-methionine is bound by residues 33–35 (AGH), aspartate 52, phenylalanine 79, aspartate 100, and glutamine 107.

This sequence belongs to the methyltransferase superfamily. RsmH family.

It is found in the cytoplasm. The catalysed reaction is cytidine(1402) in 16S rRNA + S-adenosyl-L-methionine = N(4)-methylcytidine(1402) in 16S rRNA + S-adenosyl-L-homocysteine + H(+). In terms of biological role, specifically methylates the N4 position of cytidine in position 1402 (C1402) of 16S rRNA. The chain is Ribosomal RNA small subunit methyltransferase H from Finegoldia magna (strain ATCC 29328 / DSM 20472 / WAL 2508) (Peptostreptococcus magnus).